We begin with the raw amino-acid sequence, 431 residues long: NADH-quinone oxidoreductase subunit D 2 (431 aa).

Positions 1–37 (MSEAKGVGGIDPRATPGSAGAGERPPMGTLSPRAGEG) are disordered.

Belongs to the complex I 49 kDa subunit family. In terms of assembly, NDH-1 is composed of 14 different subunits. Subunits NuoB, C, D, E, F, and G constitute the peripheral sector of the complex.

The protein localises to the cell inner membrane. The enzyme catalyses a quinone + NADH + 5 H(+)(in) = a quinol + NAD(+) + 4 H(+)(out). In terms of biological role, NDH-1 shuttles electrons from NADH, via FMN and iron-sulfur (Fe-S) centers, to quinones in the respiratory chain. The immediate electron acceptor for the enzyme in this species is believed to be ubiquinone. Couples the redox reaction to proton translocation (for every two electrons transferred, four hydrogen ions are translocated across the cytoplasmic membrane), and thus conserves the redox energy in a proton gradient. This is NADH-quinone oxidoreductase subunit D 2 from Anaeromyxobacter sp. (strain K).